Reading from the N-terminus, the 112-residue chain is MLSRFSSQLRFISAVRPVIPKFQPLRFYSVARPDAEKRILKVVSSFDKIQDPKKVTPTSTFANDLGLDSLDAVEVVMAIEEEFSIQIPDKDADEITSVGDAISYITKNPEAK.

The transit peptide at 1 to 28 (MLSRFSSQLRFISAVRPVIPKFQPLRFY) directs the protein to the mitochondrion. The Carrier domain occupies 33–109 (PDAEKRILKV…DAISYITKNP (77 aa)). At serine 69 the chain carries O-(pantetheine 4'-phosphoryl)serine.

It belongs to the acyl carrier protein (ACP) family. In terms of processing, 4'-phosphopantetheine is transferred from CoA to a specific serine of apo-ACP by acpS. This modification is essential for activity because fatty acids are bound in thioester linkage to the sulfhydryl of the prosthetic group.

The protein resides in the mitochondrion. It functions in the pathway lipid metabolism; fatty acid biosynthesis. Carrier of the growing fatty acid chain in fatty acid biosynthesis. May be involved in the synthesis of very-long-chain fatty acids. The polypeptide is Putative acyl carrier protein, mitochondrial (Schizosaccharomyces pombe (strain 972 / ATCC 24843) (Fission yeast)).